Consider the following 148-residue polypeptide: Probable transporter PD_1893 (148 aa).

The next 4 helical transmembrane spans lie at F11–I31, N48–L68, I93–P113, and L118–I138.

Belongs to the TsuA/YedE (TC 9.B.102) family.

Its subcellular location is the cell inner membrane. This chain is Probable transporter PD_1893, found in Xylella fastidiosa (strain Temecula1 / ATCC 700964).